A 130-amino-acid polypeptide reads, in one-letter code: Small ribosomal subunit protein uS9 (130 aa).

The protein belongs to the universal ribosomal protein uS9 family.

The protein is Small ribosomal subunit protein uS9 of Phytoplasma australiense.